Reading from the N-terminus, the 162-residue chain is Beta-lactoglobulin-1 (162 aa).

2 disulfides stabilise this stretch: Cys66/Cys160 and Cys106/Cys119.

Belongs to the calycin superfamily. Lipocalin family. In terms of assembly, monomer.

The protein localises to the secreted. Functionally, lactoglobulin is the primary component of whey, it binds retinol and is probably involved in the transport of that molecule. This chain is Beta-lactoglobulin-1 (LGB1), found in Felis catus (Cat).